The sequence spans 277 residues: MNLTIPFAKGHATENDFIIIPDEDARLDLTPEMVVTLCDRRAGIGADGILRVVKAADVEGSTVDPSLWFMDYRNADGSLAEMCGNGVRLFAHWLYSRGLVDNTSFDIGTRAGVRHVDILQADQHSAQVRVDMGIPDVTGLSTCDINGQVFAGLGVDMGNPHLACVVPGLSASALADMELRAPTFDQEFFPHGVNVEIVTELEDDAVSMRVWERGVGETRSCGTGTVAAACAALADAGLGEGTVKVCVPGGEVEVQIFDDGSTLTGPSAIIALGEVQI.

Residues asparagine 15 and asparagine 74 each contribute to the substrate site. Residue cysteine 83 is the Proton donor of the active site. Residues 84–85 (GN), asparagine 159, asparagine 194, and 212–213 (ER) each bind substrate. The Proton acceptor role is filled by cysteine 221. 222 to 223 (GT) lines the substrate pocket.

Belongs to the diaminopimelate epimerase family. In terms of assembly, homodimer.

It is found in the cytoplasm. It carries out the reaction (2S,6S)-2,6-diaminopimelate = meso-2,6-diaminopimelate. The protein operates within amino-acid biosynthesis; L-lysine biosynthesis via DAP pathway; DL-2,6-diaminopimelate from LL-2,6-diaminopimelate: step 1/1. In terms of biological role, catalyzes the stereoinversion of LL-2,6-diaminopimelate (L,L-DAP) to meso-diaminopimelate (meso-DAP), a precursor of L-lysine and an essential component of the bacterial peptidoglycan. Involved in the succinylase branch of the diaminopimelate biosynthesis. This chain is Diaminopimelate epimerase, found in Corynebacterium glutamicum (strain ATCC 13032 / DSM 20300 / JCM 1318 / BCRC 11384 / CCUG 27702 / LMG 3730 / NBRC 12168 / NCIMB 10025 / NRRL B-2784 / 534).